Here is a 156-residue protein sequence, read N- to C-terminus: Small ribosomal subunit protein uS7 (156 aa).

This sequence belongs to the universal ribosomal protein uS7 family. As to quaternary structure, part of the 30S ribosomal subunit. Contacts proteins S9 and S11.

Functionally, one of the primary rRNA binding proteins, it binds directly to 16S rRNA where it nucleates assembly of the head domain of the 30S subunit. Is located at the subunit interface close to the decoding center, probably blocks exit of the E-site tRNA. The polypeptide is Small ribosomal subunit protein uS7 (Paenarthrobacter aurescens (strain TC1)).